Consider the following 262-residue polypeptide: Acyl-[acyl-carrier-protein]--UDP-N-acetylglucosamine O-acyltransferase (262 aa).

It belongs to the transferase hexapeptide repeat family. LpxA subfamily. Homotrimer.

Its subcellular location is the cytoplasm. It catalyses the reaction a (3R)-hydroxyacyl-[ACP] + UDP-N-acetyl-alpha-D-glucosamine = a UDP-3-O-[(3R)-3-hydroxyacyl]-N-acetyl-alpha-D-glucosamine + holo-[ACP]. Its pathway is glycolipid biosynthesis; lipid IV(A) biosynthesis; lipid IV(A) from (3R)-3-hydroxytetradecanoyl-[acyl-carrier-protein] and UDP-N-acetyl-alpha-D-glucosamine: step 1/6. Involved in the biosynthesis of lipid A, a phosphorylated glycolipid that anchors the lipopolysaccharide to the outer membrane of the cell. The chain is Acyl-[acyl-carrier-protein]--UDP-N-acetylglucosamine O-acyltransferase from Enterobacter sp. (strain 638).